Consider the following 154-residue polypeptide: Protein X (154 aa).

The interval 68–117 is mitochondrial targeting sequence; that stretch reads PCALRFTSARRMETTVNAHRNLPKVLHKRTLGLSAMSTTDLEAYFKDCVF.

This sequence belongs to the orthohepadnavirus protein X family. In terms of assembly, may form homodimer. May interact with host CEBPA, CFLAR, CREB1, DDB1, E4F1, HBXIP, HSPD1/HSP60, NFKBIA, POLR2E and SMAD4. Interacts with host SMC5-SMC6 complex and induces its degradation. Interacts with host TRPC4AP; leading to prevent ubiquitination of TRPC4AP. Interacts with host PLSCR1; this interaction promotes ubiquitination and degradation of HBx and impairs HBx-mediated cell proliferation. Post-translationally, a fraction may be phosphorylated in insect cells and HepG2 cells, a human hepatoblastoma cell line. Phosphorylated in vitro by host protein kinase C or mitogen-activated protein kinase. N-acetylated in insect cells.

The protein resides in the host cytoplasm. Its subcellular location is the host nucleus. It is found in the host mitochondrion. Functionally, multifunctional protein that plays a role in silencing host antiviral defenses and promoting viral transcription. Does not seem to be essential for HBV infection. May be directly involved in development of cirrhosis and liver cancer (hepatocellular carcinoma). Most of cytosolic activities involve modulation of cytosolic calcium. The effect on apoptosis is controversial depending on the cell types in which the studies have been conducted. May induce apoptosis by localizing in mitochondria and causing loss of mitochondrial membrane potential. May also modulate apoptosis by binding host CFLAR, a key regulator of the death-inducing signaling complex (DISC). Promotes viral transcription by using the host E3 ubiquitin ligase DDB1 to target the SMC5-SMC6 complex to proteasomal degradation. This host complex would otherwise bind to viral episomal DNA, and prevents its transcription. Moderately stimulates transcription of many different viral and cellular transcription elements. Promoters and enhancers stimulated by HBx contain DNA binding sites for NF-kappa-B, AP-1, AP-2, c-EBP, ATF/CREB, or the calcium-activated factor NF-AT. This Hepatitis B virus genotype B1 subtype adw (isolate Japan/pJDW233/1988) (HBV-B) protein is Protein X.